The chain runs to 78 residues: HssA/B-like protein 29 (78 aa).

A disordered region spans residues 1 to 31; the sequence is MTLFSSITSISKTNTSSKSSLNSFSGSSLSM.

It belongs to the hssA/B family.

This chain is HssA/B-like protein 29 (hssl29), found in Dictyostelium discoideum (Social amoeba).